Consider the following 175-residue polypeptide: Regenerating islet-derived protein 3-alpha (175 aa).

Positions Met-1–Gly-26 are cleaved as a signal peptide. Residues Glu-27–Arg-37 constitute a propeptide that is removed on maturation. Intrachain disulfides connect Cys-40-Cys-51, Cys-68-Cys-171, and Cys-146-Cys-163. The C-type lectin domain maps to Tyr-47 to Lys-172. Zn(2+) contacts are provided by His-50 and His-107. The segment at Trp-103–Glu-118 is sufficient to activate EXTL3. The EPN motif lies at Glu-114 to Asn-116. Zn(2+) is bound by residues Glu-121 and His-145.

In terms of assembly, forms a hexameric membrane-permeabilizing oligomeric pore on membrane phospholipids. The hexamer is formed by three dimers related by helical symmetry. Forms filaments, filamentation traps pore complexes and limits damage to host cells. Interacts with EXTL3. Post-translationally, proteolytic processing by trypsin removes an inhibitory N-terminal propeptide and is essential for peptidoglycan binding and antibacterial activity. In terms of tissue distribution, expressed by keratinocytes. Highly expressed in epidermal keratinocytes of psoriasis patients (at protein level). Constitutively expressed in intestine. Low expression is found in healthy pancreas. Overexpressed during the acute phase of pancreatitis and in some patients with chronic pancreatitis.

The protein resides in the secreted. Its activity is regulated as follows. Lipopolysaccharide inhibits pore-forming activity, explaining why is bactericidal for Gram-positive but not Gram-negative bacteria. In terms of biological role, bactericidal C-type lectin which acts exclusively against Gram-positive bacteria and mediates bacterial killing by binding to surface-exposed carbohydrate moieties of peptidoglycan. Binds membrane phospholipids and kills bacteria by forming a hexameric membrane-permeabilizing oligomeric pore. Its function is as follows. Acts as a hormone in response to different stimuli like anti-inflammatory signals, such as IL17A, or gut microbiome. Secreted by different cell types to activate its receptor EXTL3 and induce cell specific signaling pathways. Induced by IL17A in keratinocytes, regulates keratinocyte proliferation and differentiation after skin injury via activation of EXTL3-PI3K-AKT signaling pathway. In parallel, inhibits skin inflammation through the inhibition of inflammatory cytokines such as IL6 and TNF. In pancreas, is able to permealize beta-cells membrane and stimulate their proliferation. Functionally, has bacteriostatic activity. The polypeptide is Regenerating islet-derived protein 3-alpha (Homo sapiens (Human)).